Reading from the N-terminus, the 460-residue chain is Probable argininosuccinate lyase (460 aa).

Residues S26, N114, and T159 each contribute to the 2-(N(omega)-L-arginino)succinate site. The active-site Proton acceptor is the H160. The active-site Proton donor is the S281. The 2-(N(omega)-L-arginino)succinate site is built by N289, Y321, Q326, and K329.

This sequence belongs to the lyase 1 family. Argininosuccinate lyase subfamily. In terms of assembly, homotetramer.

The catalysed reaction is 2-(N(omega)-L-arginino)succinate = fumarate + L-arginine. Its pathway is amino-acid biosynthesis; L-arginine biosynthesis; L-arginine from L-ornithine and carbamoyl phosphate: step 3/3. This Schizosaccharomyces pombe (strain 972 / ATCC 24843) (Fission yeast) protein is Probable argininosuccinate lyase (argx).